A 549-amino-acid chain; its full sequence is Ceramide kinase 1 (549 aa).

In terms of domain architecture, DAGKc spans 162 to 316 (NRPKNIIIFI…VDVCTVHQHQ (155 aa)). Residues 172–174 (NPF) and 205–209 (TERAN) contribute to the ATP site. 233–236 (GGDG) lines the substrate pocket. Aspartate 235 (proton donor/acceptor) is an active-site residue. ATP is bound by residues glutamate 240, 277 to 279 (GSA), arginine 342, arginine 348, and 500 to 502 (DGE).

It carries out the reaction an N-acylsphing-4-enine + ATP = an N-acylsphing-4-enine 1-phosphate + ADP + H(+). The enzyme catalyses an N-acyl-15-methylhexadecasphing-4-enine + ATP = an N-acyl-15-methylhexadecasphing-4-enine-1-phosphate + ADP + H(+). Its pathway is lipid metabolism; sphingolipid metabolism. Catalyzes the phosphorylation of ceramide to form ceramide 1-phosphate. C.elegans contain specific sphingoid bases, which are unique or different in structure compared to the sphingoid bases found in other animals. Two examples of these distinctive compounds are: 15-methylhexadecasphinganine and 15-methylhexadecasphing-4-enine. The protein is Ceramide kinase 1 of Caenorhabditis elegans.